Consider the following 304-residue polypeptide: Glutaminase (304 aa).

Ser-63, Asn-114, Glu-158, Asn-165, Tyr-189, Tyr-240, and Val-258 together coordinate substrate.

It belongs to the glutaminase family. As to quaternary structure, homotetramer.

It catalyses the reaction L-glutamine + H2O = L-glutamate + NH4(+). This chain is Glutaminase, found in Shewanella baltica (strain OS185).